A 287-amino-acid polypeptide reads, in one-letter code: Mitochondrial dicarboxylate carrier (287 aa).

Solcar repeat units follow at residues 7-87 (SRWY…MRDY), 100-187 (NKVL…AKQL), and 196-279 (DNIF…LRKH). Transmembrane regions (helical) follow at residues 9–29 (WYFG…LDLL), 62–81 (GLSA…FAIY), and 102–122 (VLLG…ADLV). Residue Lys-158 is modified to N6-acetyllysine. Transmembrane regions (helical) follow at residues 162–181 (GATM…LSCY), 202–222 (FVSS…LDVL), and 254–274 (GLFP…MFLE).

It belongs to the mitochondrial carrier (TC 2.A.29) family. As to expression, expressed at very high levels in white adipose tissue. And at low levels in brown adipose tissue, kidney and liver.

It is found in the mitochondrion inner membrane. It catalyses the reaction (S)-malate(in) + phosphate(out) = (S)-malate(out) + phosphate(in). The enzyme catalyses malonate(out) + (S)-malate(in) = malonate(in) + (S)-malate(out). The catalysed reaction is (S)-malate(in) + succinate(out) = (S)-malate(out) + succinate(in). It carries out the reaction (S)-malate(in) + sulfate(out) = (S)-malate(out) + sulfate(in). It catalyses the reaction malonate(out) + phosphate(in) = malonate(in) + phosphate(out). The enzyme catalyses succinate(out) + phosphate(in) = succinate(in) + phosphate(out). The catalysed reaction is sulfate(out) + phosphate(in) = sulfate(in) + phosphate(out). It carries out the reaction malonate(out) + succinate(in) = malonate(in) + succinate(out). Its activity is regulated as follows. Regulated by circadian protein CLOCK (Circadian Locomotor Output Cycles Kaput). Functionally, catalyzes the electroneutral exchange or flux of physiologically important metabolites such as dicarboxylates (malonate, malate, succinate), inorganic sulfur-containing anions, and phosphate, across mitochondrial inner membrane. Plays an important role in gluconeogenesis, fatty acid metabolism, urea synthesis, and sulfur metabolism, particularly in liver, by supplying the substrates for the different metabolic processes. Regulates fatty acid release from adipocytes, and contributes to systemic insulin sensitivity. This is Mitochondrial dicarboxylate carrier from Mus musculus (Mouse).